Here is a 437-residue protein sequence, read N- to C-terminus: Aspartate--tRNA(Asp/Asn) ligase (437 aa).

Glutamate 175 lines the L-aspartate pocket. An aspartate region spans residues 197–200 (QLYK). Arginine 219 contacts L-aspartate. Residues 219 to 221 (RAE), 227 to 229 (RHL), and glutamate 360 contribute to the ATP site. Residues glutamate 360 and serine 363 each coordinate Mg(2+). 2 residues coordinate L-aspartate: serine 363 and arginine 367. 408-411 (GAER) lines the ATP pocket.

It belongs to the class-II aminoacyl-tRNA synthetase family. Type 2 subfamily. As to quaternary structure, homodimer. The cofactor is Mg(2+).

It localises to the cytoplasm. The enzyme catalyses tRNA(Asx) + L-aspartate + ATP = L-aspartyl-tRNA(Asx) + AMP + diphosphate. Functionally, aspartyl-tRNA synthetase with relaxed tRNA specificity since it is able to aspartylate not only its cognate tRNA(Asp) but also tRNA(Asn). Reaction proceeds in two steps: L-aspartate is first activated by ATP to form Asp-AMP and then transferred to the acceptor end of tRNA(Asp/Asn). This is Aspartate--tRNA(Asp/Asn) ligase from Methanothermobacter thermautotrophicus (strain ATCC 29096 / DSM 1053 / JCM 10044 / NBRC 100330 / Delta H) (Methanobacterium thermoautotrophicum).